Consider the following 217-residue polypeptide: Harpin secretion protein HrcR (217 aa).

The next 4 membrane-spanning stretches (helical) occupy residues 11–31 (FALFLGALSLIPMLMIVCTCF), 52–72 (PNMALYGIALAATLFVMAPVF), 158–178 (IGFLIYIPFIVIDLIVSNVLL), and 185–205 (VAPMTLSLPLKMLLFVLINGW).

The protein belongs to the FliP/MopC/SpaP family.

The protein resides in the cell membrane. Required for the secretion of harpin. The chain is Harpin secretion protein HrcR (hrcR) from Erwinia amylovora (Fire blight bacteria).